A 187-amino-acid chain; its full sequence is Adenylate kinase (187 aa).

Residue 10-15 (GSGKGT) participates in ATP binding. The interval 30–59 (STGDMLRAEIAAGSELGKQAKAVMDAGNLV) is NMP. AMP is bound by residues Thr31, Arg36, 57-59 (NLV), 85-88 (GYPR), and Gln92. The interval 126-136 (GRAKEQGRADD) is LID. Residue Arg127 participates in ATP binding. AMP-binding residues include Arg133 and Arg144. Gly172 lines the ATP pocket.

This sequence belongs to the adenylate kinase family. In terms of assembly, monomer.

It is found in the cytoplasm. It catalyses the reaction AMP + ATP = 2 ADP. It functions in the pathway purine metabolism; AMP biosynthesis via salvage pathway; AMP from ADP: step 1/1. Its function is as follows. Catalyzes the reversible transfer of the terminal phosphate group between ATP and AMP. Plays an important role in cellular energy homeostasis and in adenine nucleotide metabolism. This chain is Adenylate kinase, found in Stenotrophomonas maltophilia (strain R551-3).